Here is a 131-residue protein sequence, read N- to C-terminus: Glycine cleavage system H protein (131 aa).

The Lipoyl-binding domain occupies 24–106 (RAIVGISDHA…YGEGWIMVIE (83 aa)). Lys-65 is subject to N6-lipoyllysine.

This sequence belongs to the GcvH family. As to quaternary structure, the glycine cleavage system is composed of four proteins: P, T, L and H. Requires (R)-lipoate as cofactor.

In terms of biological role, the glycine cleavage system catalyzes the degradation of glycine. The H protein shuttles the methylamine group of glycine from the P protein to the T protein. The sequence is that of Glycine cleavage system H protein from Xylella fastidiosa (strain 9a5c).